The chain runs to 347 residues: Protein RecA (347 aa).

67–74 (GPESSGKT) contacts ATP.

The protein belongs to the RecA family.

Its subcellular location is the cytoplasm. In terms of biological role, can catalyze the hydrolysis of ATP in the presence of single-stranded DNA, the ATP-dependent uptake of single-stranded DNA by duplex DNA, and the ATP-dependent hybridization of homologous single-stranded DNAs. It interacts with LexA causing its activation and leading to its autocatalytic cleavage. This Sulfurovum sp. (strain NBC37-1) protein is Protein RecA.